An 805-amino-acid polypeptide reads, in one-letter code: Cation channel sperm-associated auxiliary subunit delta (805 aa).

The N-terminal stretch at 1 to 16 is a signal peptide; sequence MLVLMLAAAVATMVRA. Over 17-723 the chain is Extracellular; it reads HTLCRVHTVR…ALPVTKFQPL (707 aa). 7 disulfides stabilise this stretch: Cys-20-Cys-366, Cys-56-Cys-143, Cys-142-Cys-149, Cys-384-Cys-493, Cys-507-Cys-701, Cys-522-Cys-569, and Cys-621-Cys-651. Residues Asn-227, Asn-419, Asn-469, Asn-535, and Asn-627 are each glycosylated (N-linked (GlcNAc...) asparagine). A helical membrane pass occupies residues 724–745; the sequence is LTILLMVTTTLLTAWLAYAIPK. Residues 746-805 lie on the Cytoplasmic side of the membrane; sequence QLRSEKGQRLLGFCYQILQLCLGVCFCTWLRGKLRQWLRPRRVKDQNRGKVRVAQKHPET.

Belongs to the CATSPERD family. In terms of assembly, component of the CatSper complex or CatSpermasome composed of the core pore-forming members CATSPER1, CATSPER2, CATSPER3 and CATSPER4 as well as auxiliary members CATSPERB, CATSPERG2, CATSPERD, CATSPERE, CATSPERZ, C2CD6/CATSPERT, SLCO6C1, TMEM249, TMEM262 and EFCAB9. HSPA1 may be an additional auxiliary complex member. The core complex members CATSPER1, CATSPER2, CATSPER3 and CATSPER4 form a heterotetrameric channel. The auxiliary CATSPERB, CATSPERG2, CATSPERD and CATSPERE subunits form a pavilion-like structure over the pore which stabilizes the complex through interactions with CATSPER4, CATSPER3, CATSPER1 and CATSPER2 respectively. SLCO6C1 interacts with CATSPERE and TMEM262/CATSPERH interacts with CATSPERB, further stabilizing the complex. C2CD6/CATSPERT interacts at least with CATSPERD and is required for targeting the CatSper complex in the flagellar membrane. In terms of tissue distribution, testis-specific.

Its subcellular location is the cell projection. The protein resides in the cilium. The protein localises to the flagellum membrane. Functionally, auxiliary component of the CatSper complex, a complex involved in sperm cell hyperactivation. Sperm cell hyperactivation is needed for sperm motility which is essential late in the preparation of sperm for fertilization. Required for CATSPER1 stability before intraflagellar transport and/or incorporation of the CatSper complex channel into the flagellar membrane. In Mus musculus (Mouse), this protein is Cation channel sperm-associated auxiliary subunit delta.